Consider the following 346-residue polypeptide: N-acetyl-gamma-glutamyl-phosphate reductase (346 aa).

The active site involves Cys-149.

This sequence belongs to the NAGSA dehydrogenase family. Type 1 subfamily.

It is found in the cytoplasm. It catalyses the reaction N-acetyl-L-glutamate 5-semialdehyde + phosphate + NADP(+) = N-acetyl-L-glutamyl 5-phosphate + NADPH + H(+). It functions in the pathway amino-acid biosynthesis; L-arginine biosynthesis; N(2)-acetyl-L-ornithine from L-glutamate: step 3/4. Functionally, catalyzes the NADPH-dependent reduction of N-acetyl-5-glutamyl phosphate to yield N-acetyl-L-glutamate 5-semialdehyde. This is N-acetyl-gamma-glutamyl-phosphate reductase from Geobacter metallireducens (strain ATCC 53774 / DSM 7210 / GS-15).